The following is a 265-amino-acid chain: Transcriptional activator TAF-1 (265 aa).

Disordered regions lie at residues 1–133 and 167–218; these read AHGG…SEKA and THLK…KQAE. Low complexity predominate over residues 35-46; sequence ASLSLDASAKSS. Basic and acidic residues-rich tracts occupy residues 103-115 and 191-209; these read RETT…DSKS and NERE…ESAR. One can recognise a bZIP domain in the interval 194 to 257; it reads ELKREKRKQS…EKLKLENAAL (64 aa). Positions 196–215 are basic motif; it reads KREKRKQSNRESARRSRLRK. The leucine-zipper stretch occupies residues 222–257; the sequence is LAIRVQSLTAENMTLKSEINKLMENSEKLKLENAAL.

The protein belongs to the bZIP family. In terms of tissue distribution, present mainly in roots. Barely detectable in stems and leaves.

It localises to the nucleus. Its function is as follows. Trans-activator of a beta-glucuronidase (GUS) reporter gene. Binds to a G-box-related element, (5'-GCAACGTGGC-3'). Also binds to the HEX-motif of wheat histone H3 promoter. The chain is Transcriptional activator TAF-1 (TAF1) from Nicotiana tabacum (Common tobacco).